The chain runs to 547 residues: Dihydroxy-acid dehydratase (547 aa).

Mg(2+) is bound at residue D78. [2Fe-2S] cluster is bound at residue C119. 2 residues coordinate Mg(2+): D120 and K121. K121 bears the N6-carboxylysine mark. C191 lines the [2Fe-2S] cluster pocket. E439 contributes to the Mg(2+) binding site. S464 acts as the Proton acceptor in catalysis.

This sequence belongs to the IlvD/Edd family. As to quaternary structure, homodimer. [2Fe-2S] cluster serves as cofactor. Mg(2+) is required as a cofactor.

It carries out the reaction (2R)-2,3-dihydroxy-3-methylbutanoate = 3-methyl-2-oxobutanoate + H2O. It catalyses the reaction (2R,3R)-2,3-dihydroxy-3-methylpentanoate = (S)-3-methyl-2-oxopentanoate + H2O. It participates in amino-acid biosynthesis; L-isoleucine biosynthesis; L-isoleucine from 2-oxobutanoate: step 3/4. It functions in the pathway amino-acid biosynthesis; L-valine biosynthesis; L-valine from pyruvate: step 3/4. In terms of biological role, functions in the biosynthesis of branched-chain amino acids. Catalyzes the dehydration of (2R,3R)-2,3-dihydroxy-3-methylpentanoate (2,3-dihydroxy-3-methylvalerate) into 2-oxo-3-methylpentanoate (2-oxo-3-methylvalerate) and of (2R)-2,3-dihydroxy-3-methylbutanoate (2,3-dihydroxyisovalerate) into 2-oxo-3-methylbutanoate (2-oxoisovalerate), the penultimate precursor to L-isoleucine and L-valine, respectively. The protein is Dihydroxy-acid dehydratase of Methanospirillum hungatei JF-1 (strain ATCC 27890 / DSM 864 / NBRC 100397 / JF-1).